Reading from the N-terminus, the 320-residue chain is 4-hydroxyproline 2-epimerase (320 aa).

Residue Cys98 is the Proton acceptor of the active site. Substrate-binding positions include 99–100 (GH), His218, and Asp242. Cys246 (proton donor) is an active-site residue. 247 to 248 (GT) contacts substrate.

The protein belongs to the proline racemase family.

It catalyses the reaction trans-4-hydroxy-L-proline = cis-4-hydroxy-D-proline. Catalyzes the epimerization of trans-4-hydroxy-L-proline (t4LHyp) to cis-4-hydroxy-D-proline (c4DHyp). Is likely involved in a degradation pathway that converts t4LHyp to alpha-ketoglutarate. Displays no proline racemase activity. This Burkholderia pseudomallei (strain 1710b) protein is 4-hydroxyproline 2-epimerase.